The chain runs to 82 residues: Penaeidin-3e (82 aa).

Residues 1-19 form the signal peptide; it reads MRLVVCLVFLAPFALVCHG. Gln-20 is modified (pyrrolidone carboxylic acid). 3 disulfides stabilise this stretch: Cys-51–Cys-66, Cys-55–Cys-73, and Cys-67–Cys-74. Ser-81 is modified (serine amide).

This sequence belongs to the penaeidin family.

Its subcellular location is the cytoplasmic granule. Functionally, antibacterial and antifungal activity. Presents chitin-binding activity. In Penaeus vannamei (Whiteleg shrimp), this protein is Penaeidin-3e.